Consider the following 284-residue polypeptide: Ribose-phosphate pyrophosphokinase (284 aa).

ATP-binding positions include 34-36 (DNE) and 92-93 (RQ). Histidine 125 and aspartate 163 together coordinate Mg(2+). The active site involves lysine 186. D-ribose 5-phosphate is bound by residues arginine 188, aspartate 212, and 216 to 220 (STGGT).

It belongs to the ribose-phosphate pyrophosphokinase family. Class III (archaeal) subfamily. In terms of assembly, homotetramer. It depends on Mg(2+) as a cofactor.

It is found in the cytoplasm. It carries out the reaction D-ribose 5-phosphate + ATP = 5-phospho-alpha-D-ribose 1-diphosphate + AMP + H(+). It participates in metabolic intermediate biosynthesis; 5-phospho-alpha-D-ribose 1-diphosphate biosynthesis; 5-phospho-alpha-D-ribose 1-diphosphate from D-ribose 5-phosphate (route I): step 1/1. Activated by inorganic phosphate, with a maximal activity at 190 mM. Above this concentration inorganic phosphate progressively inhibits the kinase. Completely inhibited by ADP, and partially inhibited by alpha,beta-methylene ATP (mATP). Lack of allosteric regulation. In terms of biological role, involved in the biosynthesis of the central metabolite phospho-alpha-D-ribosyl-1-pyrophosphate (PRPP) via the transfer of pyrophosphoryl group from ATP to 1-hydroxyl of ribose-5-phosphate (Rib-5-P). It can also use dATP as diphosphoryl donor. This is Ribose-phosphate pyrophosphokinase from Methanocaldococcus jannaschii (strain ATCC 43067 / DSM 2661 / JAL-1 / JCM 10045 / NBRC 100440) (Methanococcus jannaschii).